Consider the following 416-residue polypeptide: Putative serine protease HhoB (416 aa).

Positions 1-25 are cleaved as a signal peptide; it reads MAIHLKASHLGVAVLLLLFGGAIGA. Polar residues predominate over residues 35–53; that stretch reads GQNHSSPDSPVNTSPQSLT. Residues 35–57 are disordered; sequence GQNHSSPDSPVNTSPQSLTPAPV. In terms of domain architecture, PDZ spans 320-398; it reads EMTKQLRTSG…PLAIAVKRGQ (79 aa).

The protein belongs to the peptidase S1C family.

In terms of biological role, a putative protease, its function overlaps that of the related putative proteases HtrA and HhoA. This chain is Putative serine protease HhoB (hhoB), found in Synechocystis sp. (strain ATCC 27184 / PCC 6803 / Kazusa).